The sequence spans 202 residues: Glycerol-3-phosphate acyltransferase (202 aa).

6 consecutive transmembrane segments (helical) span residues 2 to 22, 54 to 74, 85 to 105, 120 to 140, 141 to 161, and 162 to 182; these read MIIV…GFVI, FLVT…PLWL, FFTN…YPVY, VVLG…FIVL, KIFK…VIGS, and LIIQ…ILII.

The protein belongs to the PlsY family. Probably interacts with PlsX.

It is found in the cell membrane. The enzyme catalyses an acyl phosphate + sn-glycerol 3-phosphate = a 1-acyl-sn-glycero-3-phosphate + phosphate. It participates in lipid metabolism; phospholipid metabolism. Functionally, catalyzes the transfer of an acyl group from acyl-phosphate (acyl-PO(4)) to glycerol-3-phosphate (G3P) to form lysophosphatidic acid (LPA). This enzyme utilizes acyl-phosphate as fatty acyl donor, but not acyl-CoA or acyl-ACP. In Staphylococcus aureus (strain Mu3 / ATCC 700698), this protein is Glycerol-3-phosphate acyltransferase.